The following is a 215-amino-acid chain: Large ribosomal subunit protein bL25 (215 aa).

The segment covering 192–202 (EEEEVEEEVAE) has biased composition (acidic residues). A disordered region spans residues 192 to 215 (EEEEVEEEVAEPEVIKRKEEEEEE). Positions 204-215 (EVIKRKEEEEEE) are enriched in basic and acidic residues.

The protein belongs to the bacterial ribosomal protein bL25 family. CTC subfamily. Part of the 50S ribosomal subunit; part of the 5S rRNA/L5/L18/L25 subcomplex. Contacts the 5S rRNA. Binds to the 5S rRNA independently of L5 and L18.

This is one of the proteins that binds to the 5S RNA in the ribosome where it forms part of the central protuberance. In Thermotoga neapolitana (strain ATCC 49049 / DSM 4359 / NBRC 107923 / NS-E), this protein is Large ribosomal subunit protein bL25.